Here is a 320-residue protein sequence, read N- to C-terminus: MRSAQVYRWQIPMDAGVVLRDRRLKTRDGLYVCLRDGEREGWGEISPLPGFSSETWEEAQTALLTWVNDWLQRSDALPEMPSVAFGASCALAELTGVLPAAADYRAAPLCTGDPDDLVLRLADMPGEKIAKVKVGLYEAVRDGMVVNLLLEAIPDLHLRLDANRAWTPLKAQQFAKYVNPDYRPRIAFLEEPCKTRDDSCAFARETGIAIAWDESLREPDFVFEAQEGVSAVVIKPMLTGALDKVRAQVAAAHALGLTAVISSSIESSLGLTQLARIAAWLTPGTLPGLDTLHLMQTQQVRPWPGSALPCLNRDELERLL.

The Proton donor role is filled by Lys133. Mg(2+)-binding residues include Asp161, Glu190, and Asp213. The active-site Proton acceptor is Lys235.

Belongs to the mandelate racemase/muconate lactonizing enzyme family. MenC type 1 subfamily. Requires a divalent metal cation as cofactor.

It catalyses the reaction (1R,6R)-6-hydroxy-2-succinyl-cyclohexa-2,4-diene-1-carboxylate = 2-succinylbenzoate + H2O. It functions in the pathway quinol/quinone metabolism; 1,4-dihydroxy-2-naphthoate biosynthesis; 1,4-dihydroxy-2-naphthoate from chorismate: step 4/7. It participates in quinol/quinone metabolism; menaquinone biosynthesis. Its function is as follows. Converts 2-succinyl-6-hydroxy-2,4-cyclohexadiene-1-carboxylate (SHCHC) to 2-succinylbenzoate (OSB). This Salmonella arizonae (strain ATCC BAA-731 / CDC346-86 / RSK2980) protein is o-succinylbenzoate synthase.